A 464-amino-acid chain; its full sequence is Ribulose bisphosphate carboxylase/oxygenase activase A, chloroplastic (464 aa).

A chloroplast-targeting transit peptide spans 1–48 (MAAAFSSTVGAPASTPTNFLGKKLKKQVTSAVNYHGKSSKANRFTVMA). 155–162 (GGKGQGKS) is a binding site for ATP.

This sequence belongs to the RuBisCO activase family.

Its subcellular location is the plastid. It localises to the chloroplast stroma. Functionally, activation of RuBisCO (ribulose-1,5-bisphosphate carboxylase/oxygenase; EC 4.1.1.39) involves the ATP-dependent carboxylation of the epsilon-amino group of lysine leading to a carbamate structure. This chain is Ribulose bisphosphate carboxylase/oxygenase activase A, chloroplastic (RCAA), found in Hordeum vulgare (Barley).